The primary structure comprises 120 residues: Superoxide dismutase [Cu-Zn] (120 aa).

Positions 11, 13, and 28 each coordinate Cu cation. A disordered region spans residues 16-52 (GDTTNGCMSTGPHFNPTGKEHGAPQDENRHAGDLGNI). Cys-22 and Cys-112 are oxidised to a cystine. Zn(2+) contacts are provided by His-28, His-36, His-45, and Asp-48. The segment covering 33–47 (GKEHGAPQDENRHAG) has biased composition (basic and acidic residues). His-85 contacts Cu cation.

The protein belongs to the Cu-Zn superoxide dismutase family. As to quaternary structure, homodimer. Cu cation serves as cofactor. It depends on Zn(2+) as a cofactor.

Its subcellular location is the cytoplasm. The enzyme catalyses 2 superoxide + 2 H(+) = H2O2 + O2. In terms of biological role, destroys radicals which are normally produced within the cells and which are toxic to biological systems. This is Superoxide dismutase [Cu-Zn] (sodC) from Aspergillus japonicus.